The chain runs to 178 residues: Ribosome maturation factor RimM (178 aa).

Residues 101–178 enclose the PRC barrel domain; the sequence is DGEYYWYQLQ…EMQVDWDADF (78 aa).

The protein belongs to the RimM family. In terms of assembly, binds ribosomal protein uS19.

It is found in the cytoplasm. Its function is as follows. An accessory protein needed during the final step in the assembly of 30S ribosomal subunit, possibly for assembly of the head region. Essential for efficient processing of 16S rRNA. May be needed both before and after RbfA during the maturation of 16S rRNA. It has affinity for free ribosomal 30S subunits but not for 70S ribosomes. The sequence is that of Ribosome maturation factor RimM from Stutzerimonas stutzeri (strain A1501) (Pseudomonas stutzeri).